A 94-amino-acid chain; its full sequence is Small ribosomal subunit protein uS19 (94 aa).

The protein belongs to the universal ribosomal protein uS19 family.

Its function is as follows. Protein S19 forms a complex with S13 that binds strongly to the 16S ribosomal RNA. The chain is Small ribosomal subunit protein uS19 from Caldicellulosiruptor saccharolyticus (strain ATCC 43494 / DSM 8903 / Tp8T 6331).